The chain runs to 908 residues: Protein translocase subunit SecA (908 aa).

ATP is bound by residues Q87, 105 to 109 (GEGKT), and D512. Residues 865 to 908 (GGDDGSDEMMAHTPMIRDGDKVGRNDPCPCGSGRKYKQCHGKLS) form a disordered region. Positions 879 to 888 (MIRDGDKVGR) are enriched in basic and acidic residues. Zn(2+) contacts are provided by C892, C894, C903, and H904. Basic residues predominate over residues 898 to 908 (RKYKQCHGKLS).

The protein belongs to the SecA family. Monomer and homodimer. Part of the essential Sec protein translocation apparatus which comprises SecA, SecYEG and auxiliary proteins SecDF-YajC and YidC. It depends on Zn(2+) as a cofactor.

The protein localises to the cell inner membrane. It is found in the cytoplasm. It catalyses the reaction ATP + H2O + cellular proteinSide 1 = ADP + phosphate + cellular proteinSide 2.. Its function is as follows. Part of the Sec protein translocase complex. Interacts with the SecYEG preprotein conducting channel. Has a central role in coupling the hydrolysis of ATP to the transfer of proteins into and across the cell membrane, serving both as a receptor for the preprotein-SecB complex and as an ATP-driven molecular motor driving the stepwise translocation of polypeptide chains across the membrane. The sequence is that of Protein translocase subunit SecA from Shewanella sp. (strain MR-4).